Consider the following 315-residue polypeptide: Probable cytochrome c oxidase subunit 2 (315 aa).

3 consecutive transmembrane segments (helical) span residues 54 to 74, 96 to 116, and 133 to 153; these read IALI…PLPW, LLYI…FVCI, and VLIE…IAVP. Cu cation contacts are provided by histidine 235, cysteine 270, cysteine 274, and histidine 278.

The protein belongs to the cytochrome c oxidase subunit 2 family. Requires Cu cation as cofactor. It depends on heme as a cofactor.

The protein localises to the cell membrane. It catalyses the reaction 4 Fe(II)-[cytochrome c] + O2 + 8 H(+)(in) = 4 Fe(III)-[cytochrome c] + 2 H2O + 4 H(+)(out). In terms of biological role, subunits I and II form the functional core of the enzyme complex. Electrons originating in cytochrome c are transferred via heme a and Cu(A) to the binuclear center formed by heme a3 and Cu(B). The sequence is that of Probable cytochrome c oxidase subunit 2 (ctaC) from Rickettsia conorii (strain ATCC VR-613 / Malish 7).